Here is a 452-residue protein sequence, read N- to C-terminus: Protein MLF3 (452 aa).

A phosphoserine mark is found at Ser-8, Ser-11, Ser-14, Ser-56, Ser-74, and Ser-79. The interval 61–94 is disordered; the sequence is SGSEVRTPSLRKNSNNVSSPLDNVIPTSRSASNS. Residues 64–81 show a composition bias toward polar residues; sequence EVRTPSLRKNSNNVSSPL. Thr-121 carries the post-translational modification Phosphothreonine. A phosphoserine mark is found at Ser-145, Ser-156, and Ser-160. Residue Thr-169 is modified to Phosphothreonine. Ser-171 carries the post-translational modification Phosphoserine. Polar residues predominate over residues 171 to 182; it reads SATLPSSESSPA. The disordered stretch occupies residues 171 to 220; the sequence is SATLPSSESSPASPDLKLSRSHSHSAATRPTLNNINNTGMTTTTSNGEPN. Phosphothreonine is present on Thr-173. Ser-183 and Ser-189 each carry phosphoserine. The segment covering 201–216 has biased composition (low complexity); sequence TLNNINNTGMTTTTSN. A Phosphotyrosine modification is found at Tyr-227. Residues Ser-228, Ser-257, and Ser-265 each carry the phosphoserine modification. 2 disordered regions span residues 290 to 321 and 348 to 402; these read PATS…NRSS and IESS…AIGK. Tyr-295 is modified (phosphotyrosine). Ser-297, Ser-320, and Ser-353 each carry phosphoserine. Residues 299–321 show a composition bias toward low complexity; the sequence is QQSARQYSNNANNNAKSPKNRSS. The segment covering 365–383 has biased composition (low complexity); that stretch reads PSFPLSSSLRSSANLASNP. The segment covering 384–398 has biased composition (polar residues); sequence ELATQTPLSTSSSYT. Ser-439 bears the Phosphoserine mark.

This sequence to yeast VHS2.

It localises to the cytoplasm. The chain is Protein MLF3 (MLF3) from Saccharomyces cerevisiae (strain ATCC 204508 / S288c) (Baker's yeast).